The primary structure comprises 304 residues: Methionyl-tRNA formyltransferase (304 aa).

Ser107–Pro110 contacts (6S)-5,6,7,8-tetrahydrofolate.

The protein belongs to the Fmt family.

The enzyme catalyses L-methionyl-tRNA(fMet) + (6R)-10-formyltetrahydrofolate = N-formyl-L-methionyl-tRNA(fMet) + (6S)-5,6,7,8-tetrahydrofolate + H(+). Attaches a formyl group to the free amino group of methionyl-tRNA(fMet). The formyl group appears to play a dual role in the initiator identity of N-formylmethionyl-tRNA by promoting its recognition by IF2 and preventing the misappropriation of this tRNA by the elongation apparatus. The polypeptide is Methionyl-tRNA formyltransferase (Coprothermobacter proteolyticus (strain ATCC 35245 / DSM 5265 / OCM 4 / BT)).